A 366-amino-acid chain; its full sequence is UDP-N-acetylenolpyruvoylglucosamine reductase (366 aa).

Residues 29–203 (VGPVARTLVT…LEVEFALDAS (175 aa)) enclose the FAD-binding PCMH-type domain. R177 is a catalytic residue. The active-site Proton donor is the S258. E358 is an active-site residue.

Belongs to the MurB family. Requires FAD as cofactor.

Its subcellular location is the cytoplasm. It catalyses the reaction UDP-N-acetyl-alpha-D-muramate + NADP(+) = UDP-N-acetyl-3-O-(1-carboxyvinyl)-alpha-D-glucosamine + NADPH + H(+). It functions in the pathway cell wall biogenesis; peptidoglycan biosynthesis. Functionally, cell wall formation. This is UDP-N-acetylenolpyruvoylglucosamine reductase from Mycobacterium marinum (strain ATCC BAA-535 / M).